The sequence spans 728 residues: Phosphoribosylformylglycinamidine synthase subunit PurL (728 aa).

Residue His42 is part of the active site. Residues Tyr45 and Lys84 each coordinate ATP. Residue Glu86 participates in Mg(2+) binding. Residues 87–90 (SHNH) and Arg109 contribute to the substrate site. The Proton acceptor role is filled by His88. Asp110 contributes to the Mg(2+) binding site. Gln237 provides a ligand contact to substrate. Mg(2+) is bound at residue Asp265. Position 309–311 (309–311 (ESQ)) interacts with substrate. 2 residues coordinate ATP: Asp491 and Gly528. Residue Asn529 coordinates Mg(2+). Residue Ser531 participates in substrate binding.

It belongs to the FGAMS family. Monomer. Part of the FGAM synthase complex composed of 1 PurL, 1 PurQ and 2 PurS subunits.

The protein resides in the cytoplasm. It catalyses the reaction N(2)-formyl-N(1)-(5-phospho-beta-D-ribosyl)glycinamide + L-glutamine + ATP + H2O = 2-formamido-N(1)-(5-O-phospho-beta-D-ribosyl)acetamidine + L-glutamate + ADP + phosphate + H(+). The protein operates within purine metabolism; IMP biosynthesis via de novo pathway; 5-amino-1-(5-phospho-D-ribosyl)imidazole from N(2)-formyl-N(1)-(5-phospho-D-ribosyl)glycinamide: step 1/2. In terms of biological role, part of the phosphoribosylformylglycinamidine synthase complex involved in the purines biosynthetic pathway. Catalyzes the ATP-dependent conversion of formylglycinamide ribonucleotide (FGAR) and glutamine to yield formylglycinamidine ribonucleotide (FGAM) and glutamate. The FGAM synthase complex is composed of three subunits. PurQ produces an ammonia molecule by converting glutamine to glutamate. PurL transfers the ammonia molecule to FGAR to form FGAM in an ATP-dependent manner. PurS interacts with PurQ and PurL and is thought to assist in the transfer of the ammonia molecule from PurQ to PurL. This is Phosphoribosylformylglycinamidine synthase subunit PurL from Campylobacter jejuni subsp. jejuni serotype O:6 (strain 81116 / NCTC 11828).